We begin with the raw amino-acid sequence, 239 residues long: 1-(5-phosphoribosyl)-5-[(5-phosphoribosylamino)methylideneamino] imidazole-4-carboxamide isomerase (239 aa).

Asp-7 acts as the Proton acceptor in catalysis. The active-site Proton donor is the Asp-129.

The protein belongs to the HisA/HisF family.

It is found in the cytoplasm. The catalysed reaction is 1-(5-phospho-beta-D-ribosyl)-5-[(5-phospho-beta-D-ribosylamino)methylideneamino]imidazole-4-carboxamide = 5-[(5-phospho-1-deoxy-D-ribulos-1-ylimino)methylamino]-1-(5-phospho-beta-D-ribosyl)imidazole-4-carboxamide. It participates in amino-acid biosynthesis; L-histidine biosynthesis; L-histidine from 5-phospho-alpha-D-ribose 1-diphosphate: step 4/9. The chain is 1-(5-phosphoribosyl)-5-[(5-phosphoribosylamino)methylideneamino] imidazole-4-carboxamide isomerase from Lactiplantibacillus plantarum (strain ATCC BAA-793 / NCIMB 8826 / WCFS1) (Lactobacillus plantarum).